A 450-amino-acid chain; its full sequence is tRNA-2-methylthio-N(6)-dimethylallyladenosine synthase (450 aa).

Residues 17–131 (KKFFVKTYGC…LNHVLDEVLA (115 aa)) enclose the MTTase N-terminal domain. The [4Fe-4S] cluster site is built by Cys-26, Cys-62, Cys-94, Cys-168, Cys-172, and Cys-175. The Radical SAM core domain occupies 154 to 385 (REDQIKAYVS…LQLQDTIYMK (232 aa)). In terms of domain architecture, TRAM spans 388–450 (QAFLGQTVEV…SHQTLLGDLQ (63 aa)).

Belongs to the methylthiotransferase family. MiaB subfamily. Monomer. Requires [4Fe-4S] cluster as cofactor.

It is found in the cytoplasm. It catalyses the reaction N(6)-dimethylallyladenosine(37) in tRNA + (sulfur carrier)-SH + AH2 + 2 S-adenosyl-L-methionine = 2-methylsulfanyl-N(6)-dimethylallyladenosine(37) in tRNA + (sulfur carrier)-H + 5'-deoxyadenosine + L-methionine + A + S-adenosyl-L-homocysteine + 2 H(+). Catalyzes the methylthiolation of N6-(dimethylallyl)adenosine (i(6)A), leading to the formation of 2-methylthio-N6-(dimethylallyl)adenosine (ms(2)i(6)A) at position 37 in tRNAs that read codons beginning with uridine. This Protochlamydia amoebophila (strain UWE25) protein is tRNA-2-methylthio-N(6)-dimethylallyladenosine synthase.